We begin with the raw amino-acid sequence, 145 residues long: MIEALIVGEMQDVQIGFVKQILSLNLVPRSNNTTCGNNTSLCDFSEMWYGVFLWAVVSSLIFHLPAALLALATLRRHKVARFFPLGILLMGIIGPLFGGVLTSAAIAGVYKAAGKSMFSLEALVFGVGQSLFIFIISFLRILATL.

Topologically, residues Met1–Gly50 are lumenal. N-linked (GlcNAc...) asparagine glycans are attached at residues Asn31 and Asn37. The chain crosses the membrane as a helical span at residues Val51–Leu71. Residues Ala72–Arg81 lie on the Cytoplasmic side of the membrane. The chain crosses the membrane as a helical span at residues Phe82 to Thr102. Residues Ser103–Met117 are Lumenal-facing. A helical membrane pass occupies residues Phe118–Phe138. Over Leu139–Leu145 the chain is Cytoplasmic.

This sequence belongs to the TMEM170 family.

Its subcellular location is the endoplasmic reticulum membrane. The protein resides in the nucleus envelope. Its function is as follows. May regulate membrane morphogenesis in the endoplasmic reticulum (ER) by promoting ER sheet formation at the expense of ER tubules. The protein is Transmembrane protein 170A (tmem170a) of Danio rerio (Zebrafish).